The primary structure comprises 502 residues: Probable malate:quinone oxidoreductase 1 (502 aa).

The protein belongs to the MQO family. FAD serves as cofactor.

It catalyses the reaction (S)-malate + a quinone = a quinol + oxaloacetate. It functions in the pathway carbohydrate metabolism; tricarboxylic acid cycle; oxaloacetate from (S)-malate (quinone route): step 1/1. The polypeptide is Probable malate:quinone oxidoreductase 1 (Pseudomonas putida (strain ATCC 47054 / DSM 6125 / CFBP 8728 / NCIMB 11950 / KT2440)).